We begin with the raw amino-acid sequence, 627 residues long: (+)-3-carene synthase 1, chloroplastic (627 aa).

Residues 1 to 36 constitute a chloroplast transit peptide; that stretch reads MSVISIVPLASKPCLYKSFISSTHEPKALRRPISTV. Asp378, Asp382, and Asp530 together coordinate Mg(2+). A DDXXD motif motif is present at residues 378 to 382; sequence DDMYD.

This sequence belongs to the terpene synthase family. Tpsd subfamily. Mg(2+) is required as a cofactor. Requires Mn(2+) as cofactor.

Its subcellular location is the plastid. It localises to the chloroplast. The catalysed reaction is (2E)-geranyl diphosphate = (+)-car-3-ene + diphosphate. It functions in the pathway terpene metabolism; oleoresin biosynthesis. Its function is as follows. Terpene synthase (TPS) involved in the biosynthesis of monoterpene natural products included in conifer oleoresin secretions and volatile emissions; these compounds contribute to biotic and abiotic stress defense against herbivores (e.g. insect attack by white pine weevil P.strobi) and pathogens. Catalyzes the conversion of (2E)-geranyl diphosphate (GPP) to (+)-car-3-ene. This chain is (+)-3-carene synthase 1, chloroplastic, found in Picea sitchensis (Sitka spruce).